Reading from the N-terminus, the 375-residue chain is Porin Omp2b (375 aa).

Residues 1–22 (MNIKSLLLGSAAALVAASGAQA) form the signal peptide.

Belongs to the alphaproteobacteria porin family. In terms of assembly, homotrimer.

Its subcellular location is the cell outer membrane. Forms passive diffusion pores that allow small molecular weight hydrophilic materials across the outer membrane. The polypeptide is Porin Omp2b (omp2b) (Brucella suis).